The chain runs to 257 residues: E3 ubiquitin-protein ligase RNF170 (257 aa).

Residues 1–24 (MADNQEGRPYFPLDEGSIIEGVSD) lie on the Lumenal side of the membrane. A helical transmembrane segment spans residues 25 to 45 (QVIVVVLLSFVAVGSLLYLLL). The Cytoplasmic portion of the chain corresponds to 46-200 (RNDEQNIHPE…GGLFWMFRIR (155 aa)). The segment at 87–130 (CPVCLQQATFPVETNCGHLFCGSCIIAYWRYGSWLGAINCPICR) adopts an RING-type zinc-finger fold. The chain crosses the membrane as a helical span at residues 201–221 (IVLCLLGALFYLVSPLDIIPE). Position 222 (Ala-222) is a topological domain, lumenal. Residues 223–243 (VFGLLGFLDDFFVLFLLLIYI) traverse the membrane as a helical segment. Topologically, residues 244 to 257 (SIMYREVVTQRLYR) are cytoplasmic.

It is found in the endoplasmic reticulum membrane. The catalysed reaction is S-ubiquitinyl-[E2 ubiquitin-conjugating enzyme]-L-cysteine + [acceptor protein]-L-lysine = [E2 ubiquitin-conjugating enzyme]-L-cysteine + N(6)-ubiquitinyl-[acceptor protein]-L-lysine.. It functions in the pathway protein modification; protein ubiquitination. E3 ubiquitin-protein ligase that plays an essential role in stimulus-induced inositol 1,4,5-trisphosphate receptor (ITPR) ubiquitination and degradation via the endoplasmic reticulum-associated degradation (ERAD) pathway. Also involved in ITPR turnover in resting cells. This Xenopus tropicalis (Western clawed frog) protein is E3 ubiquitin-protein ligase RNF170 (rnf170).